A 425-amino-acid chain; its full sequence is Histidine--tRNA ligase (425 aa).

The protein belongs to the class-II aminoacyl-tRNA synthetase family. As to quaternary structure, homodimer.

It is found in the cytoplasm. The catalysed reaction is tRNA(His) + L-histidine + ATP = L-histidyl-tRNA(His) + AMP + diphosphate + H(+). This Listeria monocytogenes serotype 4b (strain F2365) protein is Histidine--tRNA ligase.